Consider the following 612-residue polypeptide: Dihydroxy-acid dehydratase (612 aa).

Mg(2+) is bound at residue D81. A [2Fe-2S] cluster-binding site is contributed by C122. Mg(2+)-binding residues include D123 and K124. K124 is modified (N6-carboxylysine). C195 is a binding site for [2Fe-2S] cluster. E491 provides a ligand contact to Mg(2+). The active-site Proton acceptor is the S517.

This sequence belongs to the IlvD/Edd family. As to quaternary structure, homodimer. [2Fe-2S] cluster is required as a cofactor. It depends on Mg(2+) as a cofactor.

It catalyses the reaction (2R)-2,3-dihydroxy-3-methylbutanoate = 3-methyl-2-oxobutanoate + H2O. The enzyme catalyses (2R,3R)-2,3-dihydroxy-3-methylpentanoate = (S)-3-methyl-2-oxopentanoate + H2O. The protein operates within amino-acid biosynthesis; L-isoleucine biosynthesis; L-isoleucine from 2-oxobutanoate: step 3/4. It participates in amino-acid biosynthesis; L-valine biosynthesis; L-valine from pyruvate: step 3/4. In terms of biological role, functions in the biosynthesis of branched-chain amino acids. Catalyzes the dehydration of (2R,3R)-2,3-dihydroxy-3-methylpentanoate (2,3-dihydroxy-3-methylvalerate) into 2-oxo-3-methylpentanoate (2-oxo-3-methylvalerate) and of (2R)-2,3-dihydroxy-3-methylbutanoate (2,3-dihydroxyisovalerate) into 2-oxo-3-methylbutanoate (2-oxoisovalerate), the penultimate precursor to L-isoleucine and L-valine, respectively. The polypeptide is Dihydroxy-acid dehydratase (Rhizobium etli (strain ATCC 51251 / DSM 11541 / JCM 21823 / NBRC 15573 / CFN 42)).